The following is an 888-amino-acid chain: Autophagy-related protein 9 (888 aa).

Positions 1 to 170 are disordered; that stretch reads MASNIFSRIK…PYTTPMGPQP (170 aa). Over 1 to 255 the chain is Cytoplasmic; that stretch reads MASNIFSRIK…CTRKMSGLWN (255 aa). Residues 13–24 show a composition bias toward polar residues; the sequence is SGGSQSFYQQLR. A compositionally biased stretch (acidic residues) spans 28–38; the sequence is DPEYDPGLDEE. A compositionally biased stretch (polar residues) spans 123-143; it reads RATNPGSSRTPASVGPSSART. The chain crosses the membrane as a helical span at residues 256-276; it reads FAIWLYTFFFIWKCVQYFVEI. The Lumenal segment spans residues 277–422; that stretch reads RRLTYIRDFY…RLLSQKLRQR (146 aa). Residues 423–443 traverse the membrane as a helical segment; it reads FLFAGFLNLLFAPVVLAYVVI. Residues 444 to 511 lie on the Cytoplasmic side of the membrane; sequence VYFFTYYYEY…PKRITEAVAR (68 aa). An intramembrane segment occupies 512–532; the sequence is TIAFMSGAITAILAIGSVLDS. The Cytoplasmic segment spans residues 533–544; it reads ELFLNFEITKDR. A helical membrane pass occupies residues 545–565; that stretch reads PVIFYLGVFAAIWATTRGMVS. Residues 566–611 lie on the Lumenal side of the membrane; it reads EETLVFNPEYALRNVIEYTRYVPDHWKNKLHSSEVKQEFSELYKMK. Residues 612-632 form a helical membrane-spanning segment; sequence VVIFLEEMMGIVTTPMLLLFS. Residues 633 to 642 lie on the Cytoplasmic side of the membrane; it reads LPRCSDQIVD. The stretch at 643–663 is an intramembrane region; sequence FFREFTIHVDGLGYVCSFAVF. Over 664-888 the chain is Cytoplasmic; the sequence is DFQKGPGNTG…QRPRRGGGMV (225 aa). Disordered stretches follow at residues 748–770 and 834–866; these read GRTG…PRIG and EPGG…DPEA.

The protein belongs to the ATG9 family. Homotrimer; forms a homotrimer with a central pore that forms a path between the two membrane leaflets. In terms of processing, phosphorylated by ATG1. ATG1 phosphorylation is required for ATG18 interaction and preautophagosome elongation.

It localises to the preautophagosomal structure membrane. The protein localises to the cytoplasmic vesicle membrane. The protein resides in the golgi apparatus membrane. It is found in the endoplasmic reticulum membrane. It catalyses the reaction a 1,2-diacyl-sn-glycero-3-phosphocholine(in) = a 1,2-diacyl-sn-glycero-3-phosphocholine(out). It carries out the reaction a 1,2-diacyl-sn-glycero-3-phospho-L-serine(in) = a 1,2-diacyl-sn-glycero-3-phospho-L-serine(out). The enzyme catalyses a 1,2-diacyl-sn-glycero-3-phosphoethanolamine(in) = a 1,2-diacyl-sn-glycero-3-phosphoethanolamine(out). The catalysed reaction is a 1,2-diacyl-sn-glycero-3-phospho-(1D-myo-inositol-3-phosphate)(in) = a 1,2-diacyl-sn-glycero-3-phospho-(1D-myo-inositol-3-phosphate)(out). Functionally, phospholipid scramblase involved in autophagy and cytoplasm to vacuole transport (Cvt) vesicle formation. Cycles between the preautophagosomal structure/phagophore assembly site (PAS) and the cytoplasmic vesicle pool and supplies membrane for the growing autophagosome. Lipid scramblase activity plays a key role in preautophagosomal structure/phagophore assembly by distributing the phospholipids that arrive through ATG2 from the cytoplasmic to the luminal leaflet of the bilayer, thereby driving autophagosomal membrane expansion. Required for mitophagy. Also involved in endoplasmic reticulum-specific autophagic process and is essential for the survival of cells subjected to severe ER stress. Different machineries are required for anterograde trafficking to the PAS during either the Cvt pathway or bulk autophagy and for retrograde trafficking. Autophagy is required for proper vegetative growth, asexual/sexual reproduction, and full virulence. Autophagy is particularly involved in the biosynthesis of deoxynivalenol (DON), an important virulence determinant. Required for aerial hyphae development and lipid droplet degradation in response to starvation. This chain is Autophagy-related protein 9, found in Gibberella zeae (strain ATCC MYA-4620 / CBS 123657 / FGSC 9075 / NRRL 31084 / PH-1) (Wheat head blight fungus).